Consider the following 363-residue polypeptide: NAD(P)H-quinone oxidoreductase subunit 1, chloroplastic (363 aa).

6 helical membrane-spanning segments follow: residues 30–50, 98–118, 129–149, 248–268, 300–320, and 343–363; these read LVPI…IVWL, FSIG…VIPF, IGIF…LMSG, YSGI…LLSS, IIGT…FLFI, and FLLP…LLSL.

This sequence belongs to the complex I subunit 1 family. NDH is composed of at least 16 different subunits, 5 of which are encoded in the nucleus.

Its subcellular location is the plastid. It localises to the chloroplast thylakoid membrane. The enzyme catalyses a plastoquinone + NADH + (n+1) H(+)(in) = a plastoquinol + NAD(+) + n H(+)(out). The catalysed reaction is a plastoquinone + NADPH + (n+1) H(+)(in) = a plastoquinol + NADP(+) + n H(+)(out). Its function is as follows. NDH shuttles electrons from NAD(P)H:plastoquinone, via FMN and iron-sulfur (Fe-S) centers, to quinones in the photosynthetic chain and possibly in a chloroplast respiratory chain. The immediate electron acceptor for the enzyme in this species is believed to be plastoquinone. Couples the redox reaction to proton translocation, and thus conserves the redox energy in a proton gradient. The protein is NAD(P)H-quinone oxidoreductase subunit 1, chloroplastic of Gossypium barbadense (Sea Island cotton).